A 929-amino-acid chain; its full sequence is Protocadherin gamma-B3 (929 aa).

The first 30 residues, 1-30, serve as a signal peptide directing secretion; sequence MGNSSGWRGPAGQRRMLFLFLLSLLDQALS. Cadherin domains follow at residues 31–133, 134–242, 243–347, 348–452, 453–562, and 570–675; these read EPIR…PPTF, SQNI…PPVF, TQDM…APEI, TLAS…VPVF, HQAS…APLV, and EGSA…QPDL. The Extracellular segment spans residues 31 to 691; that stretch reads EPIRYAIPEE…SDPQAELQFH (661 aa). An N-linked (GlcNAc...) asparagine glycan is attached at Asn136. 2 N-linked (GlcNAc...) asparagine glycosylation sites follow: Asn419 and Asn545. A helical transmembrane segment spans residues 692 to 712; that stretch reads LVVALALISVLFLLAVILAIS. Residues 713-929 lie on the Cytoplasmic side of the membrane; the sequence is LRLRCSSRPA…KKKSGKKEKK (217 aa). Disordered regions lie at residues 791–838 and 899–929; these read NDNP…WPNN and ATLT…KEKK. Residues 919-929 are compositionally biased toward basic residues; that stretch reads NKKKSGKKEKK.

It localises to the cell membrane. In terms of biological role, potential calcium-dependent cell-adhesion protein. May be involved in the establishment and maintenance of specific neuronal connections in the brain. The protein is Protocadherin gamma-B3 (PCDHGB3) of Homo sapiens (Human).